We begin with the raw amino-acid sequence, 887 residues long: Centrobin (887 aa).

The interval Met1–Val34 is disordered. Ser81 carries the phosphoserine modification. Disordered stretches follow at residues Met110 to Ser153, Ser465 to Gln486, Thr566 to Glu591, and Leu636 to Ala695. A compositionally biased stretch (basic and acidic residues) spans Thr113–Glu128. The span at Ser133–Ser153 shows a compositional bias: polar residues. The stretch at Arg191–Glu557 forms a coiled coil. The segment at Gln360–Arg887 is required for centrosome localization. Residues Thr670 to Pro680 are compositionally biased toward basic and acidic residues. Position 782 is a phosphoserine (Ser782). The segment at Gly824–Arg887 is disordered. A compositionally biased stretch (basic and acidic residues) spans Val832–Ile849.

Interacts with LYST.

The protein resides in the cytoplasm. It localises to the cytoskeleton. Its subcellular location is the microtubule organizing center. The protein localises to the centrosome. It is found in the centriole. Required for centriole duplication. Inhibition of centriole duplication leading to defects in cytokinesis. In Mus musculus (Mouse), this protein is Centrobin (Cntrob).